The sequence spans 713 residues: MLNKIISKTISLPEHREITIETGKLAKQADGSVVVRMGDTMLLATVVFKQELDPTVDFLPLHVEYQEKFAAAGKIPGGFLRREGKLGDHEVLISRLVDRAIRPLFPDNYKHETQINIFLISADPEILPESLAGLAASAALMISPIPFEGPISEVRVARIDGQFVVNPTQSALEKADIDLMVGGSEKNILMVEGEMDEVQEADIIAAIQFAHEAIKLQCQVQKELADAVATLKFEAEPLQETENFELKDRTFKALYDKVYATAKKGITNKHLRKSSFKQIKKEYLKELLQQDPETSTVHFDKYYYELEKQVVRDLALNEGLRLDGRKLDEIRAIESEIDYLPAAHGSSLFTRGETQSLTTVTLGTKLDEQLIDRALLNGYSRFMLHYNFPSFSTGEVKFNRGPGRREIGHGHLAMRALKKVLPLDTENPYTIRIVSDILESNGSSSMATVCAGSLALMDAGISIRSAVSGIAMGLLMDEQTGKHAILSDILGDEDALGDMDFKVAGTAKGITACQMDIKVSGLTPQLLQKALEQAKAGRLHILGEMNKTITEPKTTYKKHAPSFSTMTIPKNMIGAVIGPSGKIVQEMQRETGTTIIIEEVEGKGIIKFFGPNQEAVQSAEKRVKDIVAEPVVGDVYQGTVKSIVPFGAFVEFMPGKEGLLHISEVKWERIENLDQVLELGEVIPVKLLEIDPKSGKYKLSRKVLLPNPKATEA.

Residues D494 and D500 each contribute to the Mg(2+) site. In terms of domain architecture, KH spans P561 to V623. An S1 motif domain is found at G633–K702.

The protein belongs to the polyribonucleotide nucleotidyltransferase family. Requires Mg(2+) as cofactor.

It is found in the cytoplasm. The enzyme catalyses RNA(n+1) + phosphate = RNA(n) + a ribonucleoside 5'-diphosphate. Functionally, involved in mRNA degradation. Catalyzes the phosphorolysis of single-stranded polyribonucleotides processively in the 3'- to 5'-direction. In Amoebophilus asiaticus (strain 5a2), this protein is Polyribonucleotide nucleotidyltransferase.